Consider the following 291-residue polypeptide: ATP synthase subunit a (291 aa).

A run of 5 helical transmembrane segments spans residues 48 to 68, 108 to 128, 161 to 181, 241 to 261, and 262 to 282; these read IHLDSMGWSIGLGIIFCLVFW, IAPLALTIFVWIFLMNLMDLI, DPNITLGMSLSVFVLILFYSI, LIFILIALLPFWIQWALSVPW, and AIFHILVITLQAFIFMMLTIV.

It belongs to the ATPase A chain family. In terms of assembly, F-type ATPases have 2 components, CF(1) - the catalytic core - and CF(0) - the membrane proton channel. CF(1) has five subunits: alpha(3), beta(3), gamma(1), delta(1), epsilon(1). CF(0) has three main subunits: a(1), b(2) and c(9-12). The alpha and beta chains form an alternating ring which encloses part of the gamma chain. CF(1) is attached to CF(0) by a central stalk formed by the gamma and epsilon chains, while a peripheral stalk is formed by the delta and b chains.

It localises to the cell inner membrane. Its function is as follows. Key component of the proton channel; it plays a direct role in the translocation of protons across the membrane. This chain is ATP synthase subunit a, found in Acinetobacter baylyi (strain ATCC 33305 / BD413 / ADP1).